Here is a 282-residue protein sequence, read N- to C-terminus: Bis(5'-nucleosyl)-tetraphosphatase, symmetrical (282 aa).

Belongs to the Ap4A hydrolase family. As to quaternary structure, monomer.

The enzyme catalyses P(1),P(4)-bis(5'-adenosyl) tetraphosphate + H2O = 2 ADP + 2 H(+). In terms of biological role, hydrolyzes diadenosine 5',5'''-P1,P4-tetraphosphate to yield ADP. The chain is Bis(5'-nucleosyl)-tetraphosphatase, symmetrical from Escherichia coli O157:H7.